A 140-amino-acid chain; its full sequence is Putative nickel-responsive regulator 2 (140 aa).

Residues H81, H92, H94, and C100 each contribute to the Ni(2+) site.

Belongs to the transcriptional regulatory CopG/NikR family. It depends on Ni(2+) as a cofactor.

Transcriptional regulator. The protein is Putative nickel-responsive regulator 2 of Methanosarcina acetivorans (strain ATCC 35395 / DSM 2834 / JCM 12185 / C2A).